Consider the following 338-residue polypeptide: DNA-directed RNA polymerase subunit alpha (338 aa).

The alpha N-terminal domain (alpha-NTD) stretch occupies residues 1–226 (MLIAQRPSLT…ELFGLARELN (226 aa)). An alpha C-terminal domain (alpha-CTD) region spans residues 243-338 (LAADLVMPIE…DAGFLETEHY (96 aa)).

This sequence belongs to the RNA polymerase alpha chain family. As to quaternary structure, homodimer. The RNAP catalytic core consists of 2 alpha, 1 beta, 1 beta' and 1 omega subunit. When a sigma factor is associated with the core the holoenzyme is formed, which can initiate transcription.

The catalysed reaction is RNA(n) + a ribonucleoside 5'-triphosphate = RNA(n+1) + diphosphate. DNA-dependent RNA polymerase catalyzes the transcription of DNA into RNA using the four ribonucleoside triphosphates as substrates. This Streptomyces avermitilis (strain ATCC 31267 / DSM 46492 / JCM 5070 / NBRC 14893 / NCIMB 12804 / NRRL 8165 / MA-4680) protein is DNA-directed RNA polymerase subunit alpha.